We begin with the raw amino-acid sequence, 495 residues long: Lysine--tRNA ligase (495 aa).

Mg(2+) contacts are provided by Glu-406 and Glu-413.

The protein belongs to the class-II aminoacyl-tRNA synthetase family. In terms of assembly, homodimer. It depends on Mg(2+) as a cofactor.

Its subcellular location is the cytoplasm. It catalyses the reaction tRNA(Lys) + L-lysine + ATP = L-lysyl-tRNA(Lys) + AMP + diphosphate. The polypeptide is Lysine--tRNA ligase (Leptospira interrogans serogroup Icterohaemorrhagiae serovar Lai (strain 56601)).